The sequence spans 313 residues: Porphobilinogen deaminase (313 aa).

S-(dipyrrolylmethanemethyl)cysteine is present on Cys242.

This sequence belongs to the HMBS family. In terms of assembly, monomer. The cofactor is dipyrromethane.

The enzyme catalyses 4 porphobilinogen + H2O = hydroxymethylbilane + 4 NH4(+). It functions in the pathway porphyrin-containing compound metabolism; protoporphyrin-IX biosynthesis; coproporphyrinogen-III from 5-aminolevulinate: step 2/4. Its function is as follows. Tetrapolymerization of the monopyrrole PBG into the hydroxymethylbilane pre-uroporphyrinogen in several discrete steps. This Proteus mirabilis (strain HI4320) protein is Porphobilinogen deaminase.